The chain runs to 357 residues: Alternative oxidase, mitochondrial (357 aa).

A helical membrane pass occupies residues 152–172 (LTRCIFLESIAGVPGAVASFI). Positions 159, 198, and 201 each coordinate Fe cation. Residues 218–238 (IIYVGQGVFCNLFFLFYLANP) form a helical membrane-spanning segment. Positions 249, 304, and 307 each coordinate Fe cation. Positions 330 to 357 (IPDLKEPQPESGLKVTKPHGWEKEELKL) are disordered. Basic and acidic residues predominate over residues 348–357 (HGWEKEELKL).

Belongs to the alternative oxidase family. Fe cation is required as a cofactor.

Its subcellular location is the mitochondrion inner membrane. Functionally, catalyzes cyanide-resistant oxygen consumption. May increase respiration when the cytochrome respiratory pathway is restricted, or in response to low temperatures. The sequence is that of Alternative oxidase, mitochondrial (STO1) from Scheffersomyces stipitis (strain ATCC 58785 / CBS 6054 / NBRC 10063 / NRRL Y-11545) (Yeast).